The primary structure comprises 589 residues: Malto-oligosyltrehalose trehalohydrolase (589 aa).

Residue 256–261 (GFDAVH) participates in substrate binding. The active-site Nucleophile is Asp-258. Residue Glu-295 is the Proton donor of the active site. Substrate-binding positions include 320–324 (DDFHT) and 390–395 (HDQIGN).

It belongs to the glycosyl hydrolase 13 family.

The protein resides in the cytoplasm. It carries out the reaction hydrolysis of (1-&gt;4)-alpha-D-glucosidic linkage in 4-alpha-D-[(1-&gt;4)-alpha-D-glucanosyl]n trehalose to yield trehalose and (1-&gt;4)-alpha-D-glucan.. It functions in the pathway glycan biosynthesis; trehalose biosynthesis. This Brevibacterium helvolum protein is Malto-oligosyltrehalose trehalohydrolase (treZ).